The following is a 253-amino-acid chain: Small ribosomal subunit protein eS4 (253 aa).

An S4 RNA-binding domain is found at 43–114 (LPLLLIVRNV…YPVKFFKLHP (72 aa)).

Belongs to the eukaryotic ribosomal protein eS4 family.

The sequence is that of Small ribosomal subunit protein eS4 (rps4e) from Aeropyrum pernix (strain ATCC 700893 / DSM 11879 / JCM 9820 / NBRC 100138 / K1).